Here is a 247-residue protein sequence, read N- to C-terminus: Cytochrome c oxidase subunit 2 (247 aa).

Topologically, residues 12–38 are mitochondrial intermembrane; the sequence is DVPTPWGLYFQDSSTPNQEGIIELHDN. A helical transmembrane segment spans residues 39–59; sequence IMFYLVLILCTVSWLLFSIVK. The Mitochondrial matrix portion of the chain corresponds to 60–78; the sequence is DSSKNPLPHKYLVHGQTIE. The helical transmembrane segment at 79-101 threads the bilayer; that stretch reads IIWTILPAVVLLIIAFPSFILLY. Over 102-247 the chain is Mitochondrial intermembrane; it reads LCDEVISPAM…KEFLTWLNEQ (146 aa). Cu cation contacts are provided by histidine 182, cysteine 217, glutamate 219, cysteine 221, histidine 225, and methionine 228. Glutamate 219 contributes to the Mg(2+) binding site.

It belongs to the cytochrome c oxidase subunit 2 family. As to quaternary structure, component of the cytochrome c oxidase (complex IV, CIV), a multisubunit enzyme composed of a catalytic core of 3 subunits and several supernumerary subunits. The complex exists as a monomer or a dimer and forms supercomplexes (SCs) in the inner mitochondrial membrane with ubiquinol-cytochrome c oxidoreductase (cytochrome b-c1 complex, complex III, CIII). It depends on Cu cation as a cofactor. In terms of processing, the signal sequence of COX2 is processed by IMP1.

It localises to the mitochondrion inner membrane. The catalysed reaction is 4 Fe(II)-[cytochrome c] + O2 + 8 H(+)(in) = 4 Fe(III)-[cytochrome c] + 2 H2O + 4 H(+)(out). In terms of biological role, component of the cytochrome c oxidase, the last enzyme in the mitochondrial electron transport chain which drives oxidative phosphorylation. The respiratory chain contains 3 multisubunit complexes succinate dehydrogenase (complex II, CII), ubiquinol-cytochrome c oxidoreductase (cytochrome b-c1 complex, complex III, CIII) and cytochrome c oxidase (complex IV, CIV), that cooperate to transfer electrons derived from NADH and succinate to molecular oxygen, creating an electrochemical gradient over the inner membrane that drives transmembrane transport and the ATP synthase. Cytochrome c oxidase is the component of the respiratory chain that catalyzes the reduction of oxygen to water. Electrons originating from reduced cytochrome c in the intermembrane space (IMS) are transferred via the dinuclear copper A center (CU(A)) of subunit 2 and heme A of subunit 1 to the active site in subunit 1, a binuclear center (BNC) formed by heme A3 and copper B (CU(B)). The BNC reduces molecular oxygen to 2 water molecules using 4 electrons from cytochrome c in the IMS and 4 protons from the mitochondrial matrix. The chain is Cytochrome c oxidase subunit 2 (COX2) from Cyberlindnera saturnus (Yeast).